Here is a 904-residue protein sequence, read N- to C-terminus: Translation initiation factor IF-2 (904 aa).

Residues 239-316 are disordered; sequence QAATQAKTSE…DDGQGSFQAP (78 aa). Residues 248–278 show a composition bias toward basic and acidic residues; it reads EGAEKGTLHKKPETPGKKGDKGGRAADDGKK. Residues 404–571 form the tr-type G domain; that stretch reads HRAPVVTVMG…QVLLQAEILE (168 aa). The interval 413–420 is G1; that stretch reads GHVDHGKT. A GTP-binding site is contributed by 413-420; the sequence is GHVDHGKT. The segment at 438–442 is G2; it reads GITQH. The tract at residues 459–462 is G3; the sequence is DTPG. GTP is bound by residues 459–463 and 513–516; these read DTPGH and NKID. A G4 region spans residues 513–516; the sequence is NKID. The G5 stretch occupies residues 549 to 551; that stretch reads SAK.

This sequence belongs to the TRAFAC class translation factor GTPase superfamily. Classic translation factor GTPase family. IF-2 subfamily.

The protein resides in the cytoplasm. Its function is as follows. One of the essential components for the initiation of protein synthesis. Protects formylmethionyl-tRNA from spontaneous hydrolysis and promotes its binding to the 30S ribosomal subunits. Also involved in the hydrolysis of GTP during the formation of the 70S ribosomal complex. This chain is Translation initiation factor IF-2, found in Dechloromonas aromatica (strain RCB).